A 169-amino-acid chain; its full sequence is Putative prolyl-tRNA synthetase associated domain-containing protein 1 (169 aa).

The protein belongs to the PRORSD1 family.

In Homo sapiens (Human), this protein is Putative prolyl-tRNA synthetase associated domain-containing protein 1 (PRORSD1P).